The sequence spans 262 residues: Hemin import ATP-binding protein HmuV (262 aa).

The 242-residue stretch at 3–244 (LQARNLTLAR…DHMRRVYGIE (242 aa)) folds into the ABC transporter domain. ATP is bound at residue 35-42 (GANGAGKS).

It belongs to the ABC transporter superfamily. Heme (hemin) importer (TC 3.A.1.14.5) family. As to quaternary structure, the complex is composed of two ATP-binding proteins (HmuV), two transmembrane proteins (HmuU) and a solute-binding protein (HmuT).

It is found in the cell inner membrane. Part of the ABC transporter complex HmuTUV involved in hemin import. Responsible for energy coupling to the transport system. This is Hemin import ATP-binding protein HmuV from Bordetella bronchiseptica (strain ATCC BAA-588 / NCTC 13252 / RB50) (Alcaligenes bronchisepticus).